The chain runs to 322 residues: MTASPSKLAQLRELSVVVADTGDYDAIKRLQPVDCTTNPTLVKKALDLPVYADLLERELAWGRAHGGDDRTTTVDEVADRLTIGVGVKLSALVPGRVSTEVDADLAHDTQATIAKARKFVAMYAERGVPKDKILIKIAATWEGIEAARQLQLEGIDCNLTLIFNRAQALACAEANVFLISPFVGRILDYYVAQGQTPASIDEDPGVVFVRTVYNAFKQRGSSTVVMGASFRSTAQIEALAGCDRLTISPDLLEKLDAEHGELPRKLSPGNANNAQITPIDSDSFASGLAADPMATEKLVSGIDTFAKDLHALRKTIADKLAG.

The active-site Schiff-base intermediate with substrate is K136.

The protein belongs to the transaldolase family. Type 1 subfamily. As to quaternary structure, homodimer.

It is found in the cytoplasm. The enzyme catalyses D-sedoheptulose 7-phosphate + D-glyceraldehyde 3-phosphate = D-erythrose 4-phosphate + beta-D-fructose 6-phosphate. It participates in carbohydrate degradation; pentose phosphate pathway; D-glyceraldehyde 3-phosphate and beta-D-fructose 6-phosphate from D-ribose 5-phosphate and D-xylulose 5-phosphate (non-oxidative stage): step 2/3. Its function is as follows. Transaldolase is important for the balance of metabolites in the pentose-phosphate pathway. The protein is Transaldolase of Xanthomonas oryzae pv. oryzae (strain MAFF 311018).